Here is a 161-residue protein sequence, read N- to C-terminus: Phosphopantetheine adenylyltransferase (161 aa).

Ser-9 is a binding site for substrate. ATP-binding positions include 9 to 10 (SF) and His-17. Substrate-binding residues include Lys-41, Val-73, and Lys-87. ATP is bound by residues 88–90 (GLR), Glu-98, and 122–128 (YSFVSSS).

It belongs to the bacterial CoaD family. Homohexamer. Mg(2+) serves as cofactor.

The protein localises to the cytoplasm. It catalyses the reaction (R)-4'-phosphopantetheine + ATP + H(+) = 3'-dephospho-CoA + diphosphate. It participates in cofactor biosynthesis; coenzyme A biosynthesis; CoA from (R)-pantothenate: step 4/5. Reversibly transfers an adenylyl group from ATP to 4'-phosphopantetheine, yielding dephospho-CoA (dPCoA) and pyrophosphate. This Mycobacterium bovis (strain ATCC BAA-935 / AF2122/97) protein is Phosphopantetheine adenylyltransferase.